We begin with the raw amino-acid sequence, 729 residues long: Polyribonucleotide nucleotidyltransferase (729 aa).

Positions 485 and 491 each coordinate Mg(2+). Residues 552-611 (PRITTMKVAEDKIRTIIGKGGATIKGLIESTGVSIDIDDSGVVQLFSPDKMALEEAQKQI) form the KH domain. The region spanning 621–689 (GQTYQGKVSK…KQGRVKLEWK (69 aa)) is the S1 motif domain.

The protein belongs to the polyribonucleotide nucleotidyltransferase family. Component of the RNA degradosome, which is a multiprotein complex involved in RNA processing and mRNA degradation. It depends on Mg(2+) as a cofactor.

The protein resides in the cytoplasm. It catalyses the reaction RNA(n+1) + phosphate = RNA(n) + a ribonucleoside 5'-diphosphate. Its function is as follows. Involved in mRNA degradation. Catalyzes the phosphorolysis of single-stranded polyribonucleotides processively in the 3'- to 5'-direction. The chain is Polyribonucleotide nucleotidyltransferase from Legionella pneumophila subsp. pneumophila (strain Philadelphia 1 / ATCC 33152 / DSM 7513).